The chain runs to 2920 residues: Cadherin-related hmr-1 (2920 aa).

The first 19 residues, 1-19 (MSWNILLILLISNLDEVLA), serve as a signal peptide directing secretion. Residues 20–2779 (KTLLKLPSNA…AVSKLGISSP (2760 aa)) lie on the Extracellular side of the membrane. 5 N-linked (GlcNAc...) asparagine glycosylation sites follow: N72, N243, N253, N339, and N508. Cadherin domains are found at residues 322–422 (SSRS…PPSF), 425–530 (SPLP…PPQF), 531–642 (AKQE…VPTF), 643–747 (TRPL…SAVF), 749–865 (PTSQ…KPEF), 871–979 (YSDI…SPQF), 980–1093 (ERPS…APKW), 1097–1211 (PDCK…VPQF), 1212–1335 (TVDL…APSF), 1336–1436 (EEQK…APQF), 1438–1546 (QQKY…SPIF), 1548–1661 (ERLF…APFF), 1662–1772 (EKTR…APHI), and 1772–1874 (IHGA…EPYT). 4 N-linked (GlcNAc...) asparagine glycosylation sites follow: N658, N685, N715, and N826. A glycan (N-linked (GlcNAc...) asparagine) is linked at N1177. N1417 carries an N-linked (GlcNAc...) asparagine glycan. A glycan (N-linked (GlcNAc...) asparagine) is linked at N1646. N-linked (GlcNAc...) asparagine glycosylation is found at N1935, N2224, and N2232. The EGF-like 1 domain occupies 2246-2283 (APPACQHSLCHNDGVCHNTNPGFFCECRNDGLKGARCQ). 3 disulfide bridges follow: C2250/C2261, C2255/C2270, and C2272/C2282. The 195-residue stretch at 2284-2478 (GTTRSFGGNG…AFEQNSEKGC (195 aa)) folds into the Laminin G-like domain. Residues N2307 and N2332 are each glycosylated (N-linked (GlcNAc...) asparagine). Cystine bridges form between C2452–C2478, C2501–C2515, and C2517–C2526. Residues 2492–2527 (SLNHCIHGDCFADVQGSGAMVAKCVCDPGWGGARCE) enclose the EGF-like 2 domain. The N-linked (GlcNAc...) asparagine glycan is linked to N2623. A helical membrane pass occupies residues 2780 to 2800 (AIILILVSLALLILLVMMMVV). Topologically, residues 2801–2920 (YTRRSPGAFE…VTLESIESAQ (120 aa)) are cytoplasmic. S2839 is subject to Phosphoserine. The interval 2858-2891 (IGGHPPHYPPRGMAPPKDDHELNSKIKDLETDQN) is disordered. Residues 2873 to 2887 (PKDDHELNSKIKDLE) show a composition bias toward basic and acidic residues. S2909 is modified (phosphoserine). Residue T2912 is modified to Phosphothreonine. Phosphoserine occurs at positions 2915 and 2918.

In terms of assembly, monomer in solution. Isoform a is a component of a core catenin-cadherin complex consisting of hmr-1, hmp-1 and hmp-2; the complex localizes to adherens junctions. Isoform a interacts with hmp-2; the interaction is direct. Isoform a interacts (via intracellular domain) with jac-1. Post-translationally, phosphorylation at T-2912 increases the binding affinity for hmp-2. In terms of processing, sumoylated. Sumoylation prevents accumulation at adherens junctions and decreases the binding affinity for hmp-2. As to expression, expressed in epidermal cells (at protein level). Neuron-specific.

Its subcellular location is the cell membrane. The protein resides in the cell junction. It localises to the adherens junction. The protein localises to the cell projection. It is found in the dendrite. Cadherins are calcium-dependent cell adhesion proteins. They preferentially interact with themselves in a homophilic manner in connecting cells; cadherins may thus contribute to the sorting of heterogeneous cell types. Required for adherens junction assembly and connecting adherens junctions to the cytoskeleton. Its function is as follows. Isoform a is required for cell migration during body enclosure and cell shape changes during body elongation. Required for proper localization of other junctional components, such as hmp-1, hmp-2, jac-1 and pac-1. Recruitment of pac-1 is required to establish cell polarity, independent of its role in cell adhesion. Required for primodial germ cell ingression and adherence to endodermal cells during gastrulation. In terms of biological role, isoform b is involved in axonal guidance in a subset of motor neurons. The chain is Cadherin-related hmr-1 from Caenorhabditis elegans.